The following is a 145-amino-acid chain: Basic phospholipase A2 cPt10 (145 aa).

The first 21 residues, 1–21, serve as a signal peptide directing secretion; that stretch reads MYPAHLLVLLAVCVSLLGASA. The propeptide occupies 22–27; that stretch reads IPPLPL. 7 disulfide bridges follow: Cys38–Cys98, Cys54–Cys144, Cys56–Cys72, Cys71–Cys125, Cys78–Cys118, Cys87–Cys111, and Cys105–Cys116. Tyr55, Gly57, and Gly59 together coordinate Ca(2+). Residue His75 is part of the active site. Asp76 provides a ligand contact to Ca(2+). The active site involves Asp119.

It belongs to the phospholipase A2 family. Group I subfamily. D49 sub-subfamily. It depends on Ca(2+) as a cofactor. Expressed by the venom gland.

Its subcellular location is the secreted. It carries out the reaction a 1,2-diacyl-sn-glycero-3-phosphocholine + H2O = a 1-acyl-sn-glycero-3-phosphocholine + a fatty acid + H(+). In terms of biological role, PLA2 catalyzes the calcium-dependent hydrolysis of the 2-acyl groups in 3-sn-phosphoglycerides. This is Basic phospholipase A2 cPt10 from Laticauda semifasciata (Black-banded sea krait).